We begin with the raw amino-acid sequence, 496 residues long: Polyamine oxidase 6 (496 aa).

The signal sequence occupies residues 1–27; it reads MTKPTTMAIFLVLALSIAQLLPSLVAG. Residues Glu61 and Arg69 each contribute to the FAD site. Asn103 and Asn150 each carry an N-linked (GlcNAc...) asparagine glycan. Val261 provides a ligand contact to FAD. The N-linked (GlcNAc...) asparagine glycan is linked to Asn278. FAD is bound at residue Glu454.

The protein belongs to the flavin monoamine oxidase family. The cofactor is FAD.

It localises to the secreted. Its subcellular location is the extracellular space. The protein resides in the apoplast. Its pathway is amine and polyamine degradation; spermine degradation. In terms of biological role, flavoenzyme involved in polyamine back-conversion. Catalyzes the oxidation of the secondary amino group of polyamines, such as spermine and spermidine. The polypeptide is Polyamine oxidase 6 (Oryza sativa subsp. japonica (Rice)).